The following is a 318-amino-acid chain: MSSRKIIHIDMDAFYASVELREQPHLKGRPVVVAWEGARSVICAASYEARQFGLHSAMSVATAKRLCPQAVYVPPHFDLYRQVSAQIHAVFRRYTDLIEPLSLDEAYLDVTRNFKNIPYAGDVAKEIRAAIFAETGLTASAGIAPNKFLAKIASDWRKPNGQFVLPPHKVMAFLETLPLGKIPGVGKVTLKKMQSLGMRTAGDLRRFERGELLNHFGRYGYRLYDLVRGTDERPVKAERERLQISTEITLPEDLPLEQAAGHLPHLAEDLWRQITRKNVEAQSVTLKLKTYDFRIITRTLTYSSVLPDCALCCRLRKC.

The region spanning Ile6 to Gly186 is the UmuC domain. Mg(2+) is bound by residues Asp10 and Asp104. Residue Glu105 is part of the active site.

The protein belongs to the DNA polymerase type-Y family. In terms of assembly, monomer. Mg(2+) is required as a cofactor.

Its subcellular location is the cytoplasm. It catalyses the reaction DNA(n) + a 2'-deoxyribonucleoside 5'-triphosphate = DNA(n+1) + diphosphate. In terms of biological role, poorly processive, error-prone DNA polymerase involved in untargeted mutagenesis. Copies undamaged DNA at stalled replication forks, which arise in vivo from mismatched or misaligned primer ends. These misaligned primers can be extended by PolIV. Exhibits no 3'-5' exonuclease (proofreading) activity. May be involved in translesional synthesis, in conjunction with the beta clamp from PolIII. The sequence is that of DNA polymerase IV from Neisseria meningitidis serogroup B (strain ATCC BAA-335 / MC58).